Reading from the N-terminus, the 289-residue chain is Metal-staphylopine import system permease protein CntC (289 aa).

Helical transmembrane passes span 13–33, 77–97, 115–135, 194–214, and 249–269; these read AVIA…APLV, LLYV…LGFL, VMLA…FGMG, IAII…GFSF, and IAIV…QIAI. Positions 73 to 262 constitute an ABC transmembrane type-1 domain; the sequence is IRPSLLYVFV…IIVMAFNFLS (190 aa).

This sequence belongs to the binding-protein-dependent transport system permease family. As to quaternary structure, the complex is composed of two ATP-binding proteins (CntD and CntF), two transmembrane proteins (CntB and CntC) and a solute-binding protein (CntA).

The protein localises to the cell membrane. With respect to regulation, nickel/cobalt import is reduced in the presence of zinc. Part of the ABC transporter complex CntABCDF (Opp1) involved in the uptake of metal in complex with the metallophore staphylopine (StP). Involved in the import of divalent metals ions such as nickel, cobalt and zinc. Probably responsible for the translocation of the substrate across the membrane. Plays a major role in nickel/cobalt import in zinc-depleted conditions. Contributes to virulence. Required for full urease activity in vitro. This chain is Metal-staphylopine import system permease protein CntC, found in Staphylococcus aureus (strain NCTC 8325 / PS 47).